Reading from the N-terminus, the 188-residue chain is Large ribosomal subunit protein bL35m (188 aa).

Belongs to the bacterial ribosomal protein bL35 family.

It localises to the mitochondrion. In Mus musculus (Mouse), this protein is Large ribosomal subunit protein bL35m (Mrpl35).